The sequence spans 302 residues: 4-hydroxy-tetrahydrodipicolinate synthase (302 aa).

Position 55 (threonine 55) interacts with pyruvate. Tyrosine 144 acts as the Proton donor/acceptor in catalysis. Lysine 172 acts as the Schiff-base intermediate with substrate in catalysis. Valine 214 provides a ligand contact to pyruvate.

Belongs to the DapA family. Homotetramer; dimer of dimers.

The protein localises to the cytoplasm. The enzyme catalyses L-aspartate 4-semialdehyde + pyruvate = (2S,4S)-4-hydroxy-2,3,4,5-tetrahydrodipicolinate + H2O + H(+). It functions in the pathway amino-acid biosynthesis; L-lysine biosynthesis via DAP pathway; (S)-tetrahydrodipicolinate from L-aspartate: step 3/4. Functionally, catalyzes the condensation of (S)-aspartate-beta-semialdehyde [(S)-ASA] and pyruvate to 4-hydroxy-tetrahydrodipicolinate (HTPA). In Prochlorococcus marinus (strain NATL2A), this protein is 4-hydroxy-tetrahydrodipicolinate synthase.